Consider the following 391-residue polypeptide: Terminal nucleotidyltransferase 5C (391 aa).

It belongs to the TENT family. Interacts with BCCIP and PABPC1; the interaction has no effect on TENT5C poly(A) polymerase function. Interacts with PLK4; this interaction leads to the TENT5C recruitment into the centrosome.

Its subcellular location is the nucleus. The protein resides in the cytoplasm. It localises to the cytoskeleton. The protein localises to the microtubule organizing center. It is found in the centrosome. The catalysed reaction is RNA(n) + ATP = RNA(n)-3'-adenine ribonucleotide + diphosphate. Its function is as follows. Catalyzes the transfer of one adenosine molecule from an ATP to an mRNA poly(A) tail bearing a 3'-OH terminal group and enhances mRNA stability and gene expression. Can also elongate RNA oligos ending with uridine molecule, provided that the sequence is adenosine-rich. Mainly targets mRNAs encoding endoplasmic reticulum-targeted protein. The sequence is that of Terminal nucleotidyltransferase 5C from Macaca fascicularis (Crab-eating macaque).